Here is a 384-residue protein sequence, read N- to C-terminus: 1-deoxy-D-xylulose 5-phosphate reductoisomerase (384 aa).

NADPH-binding residues include Thr10, Gly11, Ser12, Ile13, Gly36, and Asn122. Lys123 lines the 1-deoxy-D-xylulose 5-phosphate pocket. Glu124 is an NADPH binding site. Residue Asp148 coordinates Mn(2+). 1-deoxy-D-xylulose 5-phosphate is bound by residues Ser149, Glu150, Ser174, and His197. Glu150 is a Mn(2+) binding site. Gly203 is an NADPH binding site. Residues Ser210, Asn215, Lys216, and Glu219 each coordinate 1-deoxy-D-xylulose 5-phosphate. Glu219 is a binding site for Mn(2+).

This sequence belongs to the DXR family. Requires Mg(2+) as cofactor. The cofactor is Mn(2+).

The catalysed reaction is 2-C-methyl-D-erythritol 4-phosphate + NADP(+) = 1-deoxy-D-xylulose 5-phosphate + NADPH + H(+). It functions in the pathway isoprenoid biosynthesis; isopentenyl diphosphate biosynthesis via DXP pathway; isopentenyl diphosphate from 1-deoxy-D-xylulose 5-phosphate: step 1/6. Functionally, catalyzes the NADPH-dependent rearrangement and reduction of 1-deoxy-D-xylulose-5-phosphate (DXP) to 2-C-methyl-D-erythritol 4-phosphate (MEP). The polypeptide is 1-deoxy-D-xylulose 5-phosphate reductoisomerase (Chlorobium phaeobacteroides (strain DSM 266 / SMG 266 / 2430)).